Here is a 480-residue protein sequence, read N- to C-terminus: Cobyric acid synthase (480 aa).

The 188-residue stretch at 249–436 (KLKVVVPVLT…LHGFLDSEAA (188 aa)) folds into the GATase cobBQ-type domain. C330 serves as the catalytic Nucleophile. H428 is an active-site residue.

It belongs to the CobB/CobQ family. CobQ subfamily.

It functions in the pathway cofactor biosynthesis; adenosylcobalamin biosynthesis. Catalyzes amidations at positions B, D, E, and G on adenosylcobyrinic A,C-diamide. NH(2) groups are provided by glutamine, and one molecule of ATP is hydrogenolyzed for each amidation. The chain is Cobyric acid synthase from Vibrio vulnificus (strain YJ016).